A 346-amino-acid polypeptide reads, in one-letter code: Cyclin-dependent kinase 20 (346 aa).

The region spanning 4 to 288 is the Protein kinase domain; the sequence is YCILGRIGEG…ASQALLHQYF (285 aa). Residues 10–18 and Lys-33 each bind ATP; that span reads IGEGAHGIV. Asp-127 acts as the Proton acceptor in catalysis. The interval 298–324 is disordered; sequence SELPIPQRPGGPTPKAHPGPPHVHDFH. Residues 303–318 show a composition bias toward pro residues; the sequence is PQRPGGPTPKAHPGPP.

Belongs to the protein kinase superfamily. CMGC Ser/Thr protein kinase family. CDC2/CDKX subfamily. In terms of assembly, monomer. Interacts with TBC1D32 and MAK.

The protein localises to the nucleus. Its subcellular location is the cytoplasm. It is found in the cell projection. It localises to the cilium. The catalysed reaction is L-seryl-[protein] + ATP = O-phospho-L-seryl-[protein] + ADP + H(+). The enzyme catalyses L-threonyl-[protein] + ATP = O-phospho-L-threonyl-[protein] + ADP + H(+). Functionally, required for high-level Shh responses in the developing neural tube. Together with TBC1D32, controls the structure of the primary cilium by coordinating assembly of the ciliary membrane and axoneme, allowing GLI2 to be properly activated in response to SHH signaling. Involved in cell growth. Activates CDK2, a kinase involved in the control of the cell cycle, by phosphorylating residue 'Thr-160'. This Rattus norvegicus (Rat) protein is Cyclin-dependent kinase 20 (Cdk20).